We begin with the raw amino-acid sequence, 336 residues long: Coproporphyrin III ferrochelatase (336 aa).

Residues serine 52 and tyrosine 116 each contribute to the Fe-coproporphyrin III site. Residues histidine 172 and glutamate 255 each contribute to the Fe(2+) site.

This sequence belongs to the ferrochelatase family.

It is found in the cytoplasm. It catalyses the reaction Fe-coproporphyrin III + 2 H(+) = coproporphyrin III + Fe(2+). The protein operates within porphyrin-containing compound metabolism; protoheme biosynthesis. Involved in coproporphyrin-dependent heme b biosynthesis. Catalyzes the insertion of ferrous iron into coproporphyrin III to form Fe-coproporphyrin III. The sequence is that of Coproporphyrin III ferrochelatase from Mycobacterium avium (strain 104).